Consider the following 84-residue polypeptide: Small ribosomal subunit protein bS18 (84 aa).

Belongs to the bacterial ribosomal protein bS18 family. In terms of assembly, part of the 30S ribosomal subunit. Forms a tight heterodimer with protein bS6.

In terms of biological role, binds as a heterodimer with protein bS6 to the central domain of the 16S rRNA, where it helps stabilize the platform of the 30S subunit. This Vesicomyosocius okutanii subsp. Calyptogena okutanii (strain HA) protein is Small ribosomal subunit protein bS18.